The chain runs to 380 residues: E3 ubiquitin-protein ligase RNF13 (380 aa).

Positions 1–34 are cleaved as a signal peptide; the sequence is MLLSIGMLMLSATQVYTILTVQLFAFLNLLPVEA. Topologically, residues 35 to 182 are lumenal; the sequence is DILAYNFENA…VPEFSLPLEY (148 aa). In terms of domain architecture, PA spans 65-160; that stretch reads KGFLINSKPE…GESSANSLKD (96 aa). Asn-88 carries N-linked (GlcNAc...) asparagine glycosylation. The helical transmembrane segment at 183 to 203 threads the bilayer; it reads YLIPFLIIVGICLILIVIFMI. The Cytoplasmic segment spans residues 204 to 380; the sequence is TKFVQDRHRA…ERDYNIANTV (177 aa). The RING-type; atypical zinc finger occupies 240-282; the sequence is CAICLDEYEDGDKLRILPCSHAYHCKCVDPWLTKTKKTCPVCK. The segment at 285-380 is disordered; that stretch reads VVPSQGDSDS…ERDYNIANTV (96 aa). Acidic residues-rich tracts occupy residues 292-304 and 339-356; these read SDSDTDSSQEENE and SDYEEDDNDTDSSDAENE.

Interacts with ERN1. In terms of processing, autoubiquitinated.

The protein resides in the endoplasmic reticulum membrane. Its subcellular location is the late endosome membrane. It localises to the lysosome membrane. The protein localises to the nucleus inner membrane. The catalysed reaction is S-ubiquitinyl-[E2 ubiquitin-conjugating enzyme]-L-cysteine + [acceptor protein]-L-lysine = [E2 ubiquitin-conjugating enzyme]-L-cysteine + N(6)-ubiquitinyl-[acceptor protein]-L-lysine.. Its pathway is protein modification; protein ubiquitination. Functionally, E3 ubiquitin-protein ligase that regulates cell proliferation. Involved in apoptosis regulation. Mediates ER stress-induced activation of JNK signaling pathway and apoptosis by promoting ERN1 activation and splicing of XBP1 mRNA. Also involved in protein trafficking and localization. The protein is E3 ubiquitin-protein ligase RNF13 (RNF13) of Bos taurus (Bovine).